The primary structure comprises 182 residues: HGPRTase-like protein 1 (182 aa).

Belongs to the purine/pyrimidine phosphoribosyltransferase family. Archaeal HPRT subfamily.

In terms of biological role, may catalyze a purine salvage reaction, the substrate is unknown. The protein is HGPRTase-like protein 1 of Haloarcula marismortui (strain ATCC 43049 / DSM 3752 / JCM 8966 / VKM B-1809) (Halobacterium marismortui).